The primary structure comprises 109 residues: UPF0102 protein Suden_1901 (109 aa).

It belongs to the UPF0102 family.

The protein is UPF0102 protein Suden_1901 of Sulfurimonas denitrificans (strain ATCC 33889 / DSM 1251) (Thiomicrospira denitrificans (strain ATCC 33889 / DSM 1251)).